We begin with the raw amino-acid sequence, 514 residues long: Na(+)/H(+) antiporter NhaB (514 aa).

Helical transmembrane passes span 23-43, 63-83, 97-117, 120-140, 144-164, 202-222, 238-258, 303-323, 357-377, 391-411, 447-467, and 475-495; these read LALLVFLIVNPFIFLANPFVA, PLLPGGLLAIEAVIIGMTSAA, LLLMFMVAGIYFMKQLLLFIF, LLLSIRSKMVLSLAFCVAAAF, FLDALTVVAVVISVAVGFYGI, LMMHAGVGTALGGVMTMVGEP, FFLRMSPVTVPVLVCGLLTCM, AVIGVWLVTALALHLAEVGLI, LTVFFSIVAVIIDQHLFAPII, LFYLFNGLLSSISDNVFVGTI, ATPNGQAAFLFLLTSALAPLI, and VWMALPYTIVLTLIGLLCVEF.

The protein belongs to the NhaB Na(+)/H(+) (TC 2.A.34) antiporter family.

The protein localises to the cell inner membrane. It carries out the reaction 2 Na(+)(in) + 3 H(+)(out) = 2 Na(+)(out) + 3 H(+)(in). In terms of biological role, na(+)/H(+) antiporter that extrudes sodium in exchange for external protons. This is Na(+)/H(+) antiporter NhaB from Salmonella paratyphi A (strain ATCC 9150 / SARB42).